Here is a 137-residue protein sequence, read N- to C-terminus: Large ribosomal subunit protein uL16 (137 aa).

It belongs to the universal ribosomal protein uL16 family. In terms of assembly, part of the 50S ribosomal subunit.

In terms of biological role, binds 23S rRNA and is also seen to make contacts with the A and possibly P site tRNAs. The polypeptide is Large ribosomal subunit protein uL16 (Francisella tularensis subsp. tularensis (strain FSC 198)).